Here is a 252-residue protein sequence, read N- to C-terminus: Carbohydrate deacetylase (252 aa).

Mg(2+)-binding residues include histidine 59 and histidine 122.

This sequence belongs to the YdjC deacetylase family. As to quaternary structure, homodimer. Mg(2+) is required as a cofactor.

In terms of biological role, probably catalyzes the deacetylation of acetylated carbohydrates an important step in the degradation of oligosaccharides. The chain is Carbohydrate deacetylase from Vibrio cholerae serotype O1 (strain ATCC 39315 / El Tor Inaba N16961).